Consider the following 150-residue polypeptide: Large ribosomal subunit protein bL9 (150 aa).

It belongs to the bacterial ribosomal protein bL9 family.

In terms of biological role, binds to the 23S rRNA. The polypeptide is Large ribosomal subunit protein bL9 (Neisseria meningitidis serogroup C / serotype 2a (strain ATCC 700532 / DSM 15464 / FAM18)).